A 489-amino-acid chain; its full sequence is NADH-quinone oxidoreductase subunit N (489 aa).

14 helical membrane-spanning segments follow: residues 6-26 (VLFI…AVML), 37-57 (VFYI…PASS), 66-86 (LLIV…GSLA), 105-125 (FYLL…AHHL), 127-147 (AIFI…GYAF), 159-179 (YMVL…LIYA), 204-224 (ITLL…KLSL), 239-259 (PAPV…AVLL), 271-291 (FFYS…NLLA), 299-319 (RLLG…LIAC), 329-349 (VALY…VVSL), 377-397 (SAMT…GFIG), 408-430 (FHLW…YYLR), and 452-472 (ALTT…LLGI).

Belongs to the complex I subunit 2 family. NDH-1 is composed of 14 different subunits. Subunits NuoA, H, J, K, L, M, N constitute the membrane sector of the complex.

It is found in the cell inner membrane. The catalysed reaction is a quinone + NADH + 5 H(+)(in) = a quinol + NAD(+) + 4 H(+)(out). Functionally, NDH-1 shuttles electrons from NADH, via FMN and iron-sulfur (Fe-S) centers, to quinones in the respiratory chain. The immediate electron acceptor for the enzyme in this species is believed to be ubiquinone. Couples the redox reaction to proton translocation (for every two electrons transferred, four hydrogen ions are translocated across the cytoplasmic membrane), and thus conserves the redox energy in a proton gradient. This Tolumonas auensis (strain DSM 9187 / NBRC 110442 / TA 4) protein is NADH-quinone oxidoreductase subunit N.